The following is a 328-amino-acid chain: Methionyl-tRNA formyltransferase (328 aa).

Ser-121 to Pro-124 contributes to the (6S)-5,6,7,8-tetrahydrofolate binding site.

It belongs to the Fmt family.

It carries out the reaction L-methionyl-tRNA(fMet) + (6R)-10-formyltetrahydrofolate = N-formyl-L-methionyl-tRNA(fMet) + (6S)-5,6,7,8-tetrahydrofolate + H(+). Attaches a formyl group to the free amino group of methionyl-tRNA(fMet). The formyl group appears to play a dual role in the initiator identity of N-formylmethionyl-tRNA by promoting its recognition by IF2 and preventing the misappropriation of this tRNA by the elongation apparatus. The sequence is that of Methionyl-tRNA formyltransferase from Paraburkholderia phytofirmans (strain DSM 17436 / LMG 22146 / PsJN) (Burkholderia phytofirmans).